Consider the following 453-residue polypeptide: Alpha-glucosidase (453 aa).

3-69 (TKIVLVGAGS…LPFIVSATTD (67 aa)) provides a ligand contact to NAD(+). Residue Asn149 participates in substrate binding. Cys171 is a binding site for Mn(2+). His172 functions as the Proton donor in the catalytic mechanism. His201 contributes to the Mn(2+) binding site.

In terms of assembly, homotetramer. Requires Mn(2+) as cofactor. Co(2+) is required as a cofactor. The cofactor is Ca(2+). It depends on Fe(2+) as a cofactor. Mg(2+) serves as cofactor. Requires Sr(2+) as cofactor. Ni(2+) is required as a cofactor. The cofactor is NAD(+).

The enzyme catalyses Hydrolysis of terminal, non-reducing (1-&gt;4)-linked alpha-D-glucose residues with release of alpha-D-glucose.. The protein operates within glycan degradation; palatinose degradation. With respect to regulation, is inhibited by EDTA in vitro. In terms of biological role, alpha-glucosidase with broad specificity. Hydrolyzes maltose, palatinose, maltulose, trehalose, trehalulose, turanose, leucrose, sucrose and maltitol. Is not active against alpha-galactosides, e.g. melibiose, and alpha-mannosides. Shows an obligate requirement for an O-alpha-glycosidic linkage, since it is not able to cleave beta-glycosidic bonds (cellobiose, gentiobiose, lactose, sophorose or laminaribiose). Cannot hydrolyze phosphorylated alpha-glucosides derivatives. Seems to be involved in the degradation of palatinose, a sucrose isomer that is formed as a reserve material under conditions of excess carbon availability, sequestered in a form unavailable to competitors such as fungi or the host plant, and whose consumption appears to be postponed until the preferentially metabolized carbon source (e.g. sucrose) is depleted. This is Alpha-glucosidase (palH) from Erwinia rhapontici (Pectobacterium rhapontici).